We begin with the raw amino-acid sequence, 193 residues long: Ion-translocating oxidoreductase complex subunit A (193 aa).

A run of 6 helical transmembrane segments spans residues 5 to 25 (LMLF…FLGL), 39 to 59 (LGMG…AWLI), 62 to 82 (FILL…FIIA), 102 to 122 (LLGI…VALL), 134 to 154 (ALYG…FAAI), and 171 to 191 (SIAL…TGLV).

It belongs to the NqrDE/RnfAE family. In terms of assembly, the complex is composed of six subunits: RnfA, RnfB, RnfC, RnfD, RnfE and RnfG.

It is found in the cell inner membrane. Its function is as follows. Part of a membrane-bound complex that couples electron transfer with translocation of ions across the membrane. This is Ion-translocating oxidoreductase complex subunit A from Sodalis glossinidius (strain morsitans).